The chain runs to 384 residues: GTPase Obg (384 aa).

Positions 1 to 159 (MKFIDEAKIE…RSLQLELKVL (159 aa)) constitute an Obg domain. The tract at residues 20-46 (ATSFRREKFVPRGGPDGGDGGKGGSVW) is disordered. Positions 33–43 (GPDGGDGGKGG) are enriched in gly residues. Residues 160 to 348 (ADVGLLGMPN…LVHQINQYLI (189 aa)) enclose the OBG-type G domain. GTP contacts are provided by residues 166–173 (GMPNAGKS), 191–195 (FTTLH), 213–216 (DIPG), 284–287 (NKLD), and 329–331 (SAL). S173 and T193 together coordinate Mg(2+). The interval 364–384 (ATNVEIAEQQPKTDTGVFKPE) is disordered.

Belongs to the TRAFAC class OBG-HflX-like GTPase superfamily. OBG GTPase family. In terms of assembly, monomer. Mg(2+) serves as cofactor.

The protein resides in the cytoplasm. In terms of biological role, an essential GTPase which binds GTP, GDP and possibly (p)ppGpp with moderate affinity, with high nucleotide exchange rates and a fairly low GTP hydrolysis rate. Plays a role in control of the cell cycle, stress response, ribosome biogenesis and in those bacteria that undergo differentiation, in morphogenesis control. The chain is GTPase Obg from Neisseria meningitidis serogroup A / serotype 4A (strain DSM 15465 / Z2491).